Reading from the N-terminus, the 456-residue chain is Adenylosuccinate lyase (456 aa).

Residues 15–16, 90–92, and 122–123 contribute to the N(6)-(1,2-dicarboxyethyl)-AMP site; these read RY, NHD, and TS. Residue His-171 is the Proton donor/acceptor of the active site. Gln-247 is a binding site for N(6)-(1,2-dicarboxyethyl)-AMP. Ser-295 (proton donor/acceptor) is an active-site residue. Residues Ser-296, 301–303, Asn-309, Arg-335, and 340–344 each bind N(6)-(1,2-dicarboxyethyl)-AMP; these read KVN and STVLR.

This sequence belongs to the lyase 1 family. Adenylosuccinate lyase subfamily. As to quaternary structure, homotetramer. Residues from neighboring subunits contribute catalytic and substrate-binding residues to each active site.

It catalyses the reaction N(6)-(1,2-dicarboxyethyl)-AMP = fumarate + AMP. The catalysed reaction is (2S)-2-[5-amino-1-(5-phospho-beta-D-ribosyl)imidazole-4-carboxamido]succinate = 5-amino-1-(5-phospho-beta-D-ribosyl)imidazole-4-carboxamide + fumarate. Its pathway is purine metabolism; AMP biosynthesis via de novo pathway; AMP from IMP: step 2/2. The protein operates within purine metabolism; IMP biosynthesis via de novo pathway; 5-amino-1-(5-phospho-D-ribosyl)imidazole-4-carboxamide from 5-amino-1-(5-phospho-D-ribosyl)imidazole-4-carboxylate: step 2/2. Catalyzes two reactions in de novo purine nucleotide biosynthesis. Catalyzes the breakdown of 5-aminoimidazole- (N-succinylocarboxamide) ribotide (SAICAR or 2-[5-amino-1-(5-phospho-beta-D-ribosyl)imidazole-4-carboxamido]succinate) to 5-aminoimidazole-4-carboxamide ribotide (AICAR or 5-amino-1-(5-phospho-beta-D-ribosyl)imidazole-4-carboxamide) and fumarate, and of adenylosuccinate (ADS or N(6)-(1,2-dicarboxyethyl)-AMP) to adenosine monophosphate (AMP) and fumarate. The chain is Adenylosuccinate lyase (purB) from Legionella pneumophila subsp. pneumophila (strain Philadelphia 1 / ATCC 33152 / DSM 7513).